A 176-amino-acid polypeptide reads, in one-letter code: Centromere protein R (176 aa).

A Glycyl lysine isopeptide (Lys-Gly) (interchain with G-Cter in SUMO2) cross-link involves residue Lys8. Ser17 bears the Phosphoserine mark. The segment at 20-50 is DD1; that stretch reads PSKIVRKKSITAYSPTTGTYQLSPFSSPATP. Residue Lys22 forms a Glycyl lysine isopeptide (Lys-Gly) (interchain with G-Cter in SUMO2) linkage. At Ser28 the chain carries Phosphoserine. Positions 34 to 48 are enriched in polar residues; the sequence is PTTGTYQLSPFSSPA. Positions 34 to 78 are disordered; it reads PTTGTYQLSPFSSPATPKEQEHRNGPSNETRKRSNLSSPVRQEST. The span at 51 to 65 shows a compositional bias: basic and acidic residues; the sequence is KEQEHRNGPSNETRK. Residues 63–66 carry the Nuclear localization signal motif; it reads TRKR. Residue Ser71 is modified to Phosphoserine. Positions 82-112 form a coiled coil; that stretch reads RDGFMVLLSKIEISSEKTMEIMKNLSSIQAL. Residues 171–175 carry the LXXIL motif motif; sequence LKAIL.

As to quaternary structure, homodimer; mediated by the coiled coil domain. Interacts with CCNA2 and MTA1. Interacts with NFKB1 NF-kappa-B subunit. Component of the CENPA-CAD complex, composed of CENPI, CENPK, CENPL, CENPO, CENPP, CENPQ, CENPR and CENPS. The CENPA-CAD complex interacts with the CENPA-NAC complex, at least composed of CENPA, CENPC, CENPH, CENPM, CENPN, CENPT and CENPU. Interacts with TASOR. As to expression, expressed in the spermatogonia and spermatocytes.

The protein resides in the nucleus. It localises to the chromosome. The protein localises to the centromere. It is found in the kinetochore. In terms of biological role, transcription coregulator that can have both coactivator and corepressor functions. Involved in the coactivation of nuclear receptors for retinoid X (RXRs) and thyroid hormone (TRs) in a ligand-dependent fashion. In contrast, it does not coactivate nuclear receptors for retinoic acid, vitamin D, progesterone receptor, nor glucocorticoid. Acts as a coactivator for estrogen receptor alpha. Acts as a transcriptional corepressor via its interaction with the NFKB1 NF-kappa-B subunit, possibly by interfering with the transactivation domain of NFKB1. Induces apoptosis in breast cancer cells, but not in other cancer cells, via a caspase-2 mediated pathway that involves mitochondrial membrane permeabilization but does not require other caspases. May also act as an inhibitor of cyclin A-associated kinase. Also acts a component of the CENPA-CAD (nucleosome distal) complex, a complex recruited to centromeres which is involved in assembly of kinetochore proteins, mitotic progression and chromosome segregation. May be involved in incorporation of newly synthesized CENPA into centromeres via its interaction with the CENPA-NAC complex. The sequence is that of Centromere protein R (Itgb3bp) from Mus musculus (Mouse).